A 195-amino-acid polypeptide reads, in one-letter code: Dihydroneopterin triphosphate diphosphatase (195 aa).

Asp-73 serves as the catalytic Proton acceptor.

Belongs to the HAM1 NTPase family. Mn(2+) serves as cofactor.

It catalyses the reaction 7,8-dihydroneopterin 3'-triphosphate + H2O = 7,8-dihydroneopterin 3'-phosphate + diphosphate + H(+). It functions in the pathway cofactor biosynthesis; tetrahydrofolate biosynthesis. Functionally, pyrophosphatase involved in the biosynthesis of tetrahydrofolate. Catalyzes the hydrolysis of dihydroneopterin triphosphate (DHNTP) to dihydroneopterin monophosphate (DHNMP) and pyrophosphate. Shows a strict substrate specificity. Has only weak activity with GTP, ITP, XTP and dTTP, and cannot use ATP, UTP, CTP, NAD(+), NADH, diadenosine triphosphate, diadenosine tetraphosphate, ADP-ribose and UDP-glucose. This is Dihydroneopterin triphosphate diphosphatase from Limosilactobacillus reuteri (strain DSM 20016) (Lactobacillus reuteri).